A 387-amino-acid chain; its full sequence is Fructose-1,6-bisphosphate aldolase/phosphatase (387 aa).

Asp-13 functions as the Proton acceptor; for FBP phosphatase activity in the catalytic mechanism. Positions 13, 20, 54, and 55 each coordinate Mg(2+). Position 20 (His-20) interacts with beta-D-fructose 1,6-bisphosphate. Dihydroxyacetone phosphate is bound at residue His-20. Tyr-92 lines the beta-D-fructose 1,6-bisphosphate pocket. Gln-96 is a binding site for Mg(2+). Position 105–106 (105–106 (GN)) interacts with beta-D-fructose 1,6-bisphosphate. Residue Asp-133 participates in Mg(2+) binding. Residue Lys-134 coordinates beta-D-fructose 1,6-bisphosphate. Lys-134 is a dihydroxyacetone phosphate binding site. Tyr-229 acts as the Proton donor/acceptor; for FBP aldolase activity in catalysis. Positions 232, 233, and 234 each coordinate Mg(2+). Catalysis depends on Lys-232, which acts as the Schiff-base intermediate with DHAP; for FBP aldolase activity. Residues 242 to 243 (QS), Arg-266, Asp-287, and Tyr-348 each bind beta-D-fructose 1,6-bisphosphate. Dihydroxyacetone phosphate-binding residues include Arg-266 and Asp-287.

This sequence belongs to the FBP aldolase/phosphatase family. As to quaternary structure, homooctamer; dimer of tetramers. The cofactor is Mg(2+).

It carries out the reaction beta-D-fructose 1,6-bisphosphate + H2O = beta-D-fructose 6-phosphate + phosphate. It catalyses the reaction beta-D-fructose 1,6-bisphosphate = D-glyceraldehyde 3-phosphate + dihydroxyacetone phosphate. The protein operates within carbohydrate biosynthesis; gluconeogenesis. Catalyzes two subsequent steps in gluconeogenesis: the aldol condensation of dihydroxyacetone phosphate (DHAP) and glyceraldehyde-3-phosphate (GA3P) to fructose-1,6-bisphosphate (FBP), and the dephosphorylation of FBP to fructose-6-phosphate (F6P). The chain is Fructose-1,6-bisphosphate aldolase/phosphatase from Ignicoccus hospitalis (strain KIN4/I / DSM 18386 / JCM 14125).